Reading from the N-terminus, the 631-residue chain is Putative meiotic phospholipase SPO1 (631 aa).

An N-terminal signal peptide occupies residues 1–17 (MQKLLFVFSVLLTVVLA). The required for lipid-binding and function in meiosis stretch occupies residues 24–67 (QCPSSPLIREAKHELCPEETLYLKKKKIKTKNKLIQFLKSLTEA). The PLA2c domain occupies 24–631 (QCPSSPLIRE…LQCFKDYCYS (608 aa)). 3 N-linked (GlcNAc...) asparagine glycosylation sites follow: Asn-233, Asn-293, and Asn-303. The chain crosses the membrane as a helical span at residues 376-396 (FITATSSSIFNNVLIFIWNLA). N-linked (GlcNAc...) asparagine glycans are attached at residues Asn-500, Asn-536, Asn-560, Asn-563, and Asn-572.

This sequence belongs to the lysophospholipase family. In terms of assembly, interacts with SPO23. Glycosylated.

The protein resides in the endoplasmic reticulum membrane. Its subcellular location is the nucleus membrane. Its function is as follows. Regulates spindle pole duplication in meiosis I, but not in mitosis. Required for meiosis I, meiosis II chromosome segregation and spore formation. Binds phosphatidylinositol (4)P mono- and polyphosphates. In Saccharomyces cerevisiae (strain ATCC 204508 / S288c) (Baker's yeast), this protein is Putative meiotic phospholipase SPO1 (SPO1).